Reading from the N-terminus, the 407-residue chain is Oligopeptide transport system permease protein OppB (407 aa).

Helical transmembrane passes span 9-29 (LGLAVVAMFIVMSIVFFLVNA), 101-121 (LYVVLISFLIGSLLGIFLGMV), 134-154 (INVLVVLFVSIPSFVVGLGLL), 179-199 (FLLASIIPILSLVFYSSAAFT), 238-258 (IIPSIPLFVFGISGAFSGGFI), and 288-308 (ILFIQGIPLLASVFIEFIYVL). The ABC transmembrane type-1 domain occupies 97–307 (VPNTLYVVLI…ASVFIEFIYV (211 aa)).

It belongs to the binding-protein-dependent transport system permease family. OppBC subfamily. As to quaternary structure, the complex is composed of two ATP-binding proteins (OppD and OppF), two transmembrane proteins (OppB and OppC) and a solute-binding protein (OppA).

It localises to the cell membrane. Functionally, part of the ABC transporter complex OppABCDF involved in the uptake of oligopeptides. Probably responsible for the translocation of the substrate across the membrane. This chain is Oligopeptide transport system permease protein OppB (oppB), found in Mycoplasma genitalium (strain ATCC 33530 / DSM 19775 / NCTC 10195 / G37) (Mycoplasmoides genitalium).